The following is a 1044-amino-acid chain: Integrin alpha-V (1044 aa).

A signal peptide spans 1–30; sequence MAAPGRLLLRPRPGGLLLLLPGLLLPLADA. The Extracellular portion of the chain corresponds to 31 to 988; sequence FNLDVESPAE…WGIQPAPMPV (958 aa). FG-GAP repeat units follow at residues 32–98, 109–170, 173–225, 237–291, 292–357, 358–415, and 419–482; these read NLDV…RRCQ, DYAK…VEYA, RSKN…ISKY, QLAT…GKNM, SSLH…GDFQ, TTKL…GLNS, and QILE…VYPS. An N-linked (GlcNAc...) asparagine glycan is attached at Asn74. 3 disulfide bridges follow: Cys89–Cys97, Cys138–Cys158, and Cys172–Cys185. Residues Asp260, Asn262, Asp264, Ile266, and Asp268 each contribute to the Ca(2+) site. Asn290 and Asn296 each carry an N-linked (GlcNAc...) asparagine glycan. Ca(2+) contacts are provided by Asp314, Asn316, Asp318, Tyr320, Asp322, Asp379, Asp381, Asp383, Phe385, Asp387, Asp443, Asp445, Asn447, Tyr449, and Asp451. 2 disulfides stabilise this stretch: Cys491–Cys502 and Cys508–Cys565. Residue Asn615 is glycosylated (N-linked (GlcNAc...) asparagine). Intrachain disulfides connect Cys626–Cys632 and Cys698–Cys711. Asn704, Asn835, Asn851, and Asn869 each carry an N-linked (GlcNAc...) asparagine glycan. 2 cysteine pairs are disulfide-bonded: Cys852–Cys910 and Cys900–Cys905. Asn941, Asn969, and Asn976 each carry an N-linked (GlcNAc...) asparagine glycan. The helical transmembrane segment at 989-1012 threads the bilayer; sequence PVWVIILAVLAGLLLLAVLVFVMY. Over 1013 to 1044 the chain is Cytoplasmic; the sequence is RMGFFKRVRPPQEEQEREQLQPHENGEGNSET. Positions 1015–1019 match the GFFKR motif motif; it reads GFFKR. The span at 1023 to 1038 shows a compositional bias: basic and acidic residues; sequence PQEEQEREQLQPHENG. Residues 1023 to 1044 are disordered; sequence PQEEQEREQLQPHENGEGNSET.

This sequence belongs to the integrin alpha chain family. In terms of assembly, heterodimer of an alpha and a beta subunit. The alpha subunit is composed of a heavy and a light chain linked by a disulfide bond. Alpha-V (ITGAV) associates with either beta-1 (ITGB1), beta-3 (ITGB3), beta-5 (ITGB5), beta-6 (ITGB6) or beta-8 (ITGB8). Interacts with RAB25. Interacts with CIB1. Integrins ITGAV:ITGB3 and ITGAV:ITGB5 interact with FBLN5 (via N-terminus). ITGAV:ITGB3 and ITGAV:ITGB5 interact with CCN3. ITGAV:ITGB3 interacts with ADGRA2. ITGAV:ITGB3 interacts with FGF2; it is likely that FGF2 can simultaneously bind ITGAV:ITGB3 and FGF receptors. ITGAV:ITGB3 interacts with SELP (via C-type lectin domain); the interaction mediates cell-cell interaction and adhesion. ITGAV:ITGB3 is found in a ternary complex with CX3CR1 and CX3CL1. ITGAV:ITGB3 is found in a ternary complex with NRG1 and ERBB3. ITGAV:ITGB3 is found in a ternary complex with FGF1 and FGFR1. ITGAV:ITGB3 is found in a ternary complex with IGF1 and IGF1R. ITGAV:ITGB3 interacts with IGF2. ITGAV:ITGB3 and ITGAV:ITGB6 interact with FBN1. ITGAV:ITGB3 interacts with CD9, CD81 and CD151 (via second extracellular domain). ITGAV:ITGB6 interacts with TGFB1. ITGAV:ITGB3 interacts with PTN. Forms a complex with PTPRZ1 and PTN that stimulates endothelial cell migration through ITGB3 'Tyr-773' phosphorylation. Interacts with TM4SF19.

It localises to the cell membrane. It is found in the cell junction. The protein resides in the focal adhesion. Its function is as follows. The alpha-V (ITGAV) integrins are receptors for vitronectin, cytotactin, fibronectin, fibrinogen, laminin, matrix metalloproteinase-2, osteopontin, osteomodulin, prothrombin, thrombospondin, TGFB1 and vWF. They recognize the sequence R-G-D in a wide array of ligands. Alpha-V integrins may play a role in embryo implantation, angiogenesis and wound healing. ITGAV:ITGB3 binds to fractalkine (CX3CL1) and may act as its coreceptor in CX3CR1-dependent fractalkine signaling. ITGAV:ITGB3 binds to NRG1 (via EGF domain) and this binding is essential for NRG1-ERBB signaling. ITGAV:ITGB3 binds to FGF1 and this binding is essential for FGF1 signaling. ITGAV:ITGB3 binds to FGF2 and this binding is essential for FGF2 signaling. ITGAV:ITGB3 binds to IGF1 and this binding is essential for IGF1 signaling. ITGAV:ITGB3 binds to IGF2 and this binding is essential for IGF2 signaling. ITGAV:ITGB3 binds to IL1B and this binding is essential for IL1B signaling. ITGAV:ITGB3 binds to PLA2G2A via a site (site 2) which is distinct from the classical ligand-binding site (site 1) and this induces integrin conformational changes and enhanced ligand binding to site 1. ITGAV:ITGB3 and ITGAV:ITGB6 act as a receptor for fibrillin-1 (FBN1) and mediate R-G-D-dependent cell adhesion to FBN1. Integrin alpha-V/beta-6 or alpha-V/beta-8 (ITGAV:ITGB6 or ITGAV:ITGB8) mediates R-G-D-dependent release of transforming growth factor beta-1 (TGF-beta-1) from regulatory Latency-associated peptide (LAP), thereby playing a key role in TGF-beta-1 activation. ITGAV:ITGB3 acts as a receptor for CD40LG. ITGAV:ITGB3 binds to the Lilrb4a/Gp49b receptor and enhances the Lilrb4a-mediated inhibition of mast cell activation. ITGAV:ITGB3 also suppresses marginal zone B cell antibody production through its interaction with Lilrb4a. ITGAV:ITGB3 acts as a receptor for IBSP and promotes cell adhesion and migration to IBSP. The chain is Integrin alpha-V (Itgav) from Mus musculus (Mouse).